Consider the following 203-residue polypeptide: N-(5'-phosphoribosyl)anthranilate isomerase (203 aa).

It belongs to the TrpF family.

It catalyses the reaction N-(5-phospho-beta-D-ribosyl)anthranilate = 1-(2-carboxyphenylamino)-1-deoxy-D-ribulose 5-phosphate. The protein operates within amino-acid biosynthesis; L-tryptophan biosynthesis; L-tryptophan from chorismate: step 3/5. The chain is N-(5'-phosphoribosyl)anthranilate isomerase from Geobacter sulfurreducens (strain ATCC 51573 / DSM 12127 / PCA).